Consider the following 279-residue polypeptide: uncharacterized protein (279 aa).

2 disordered regions span residues 50–109 (YTYN…YNKN) and 249–279 (SQSQ…SPKL). A compositionally biased stretch (low complexity) spans 68–109 (NNNSNYNNNNNNNNNNNNNNNNNNNNNNNKNNNNNNYNYNKN).

This is an uncharacterized protein from Dictyostelium discoideum (Social amoeba).